The following is a 429-amino-acid chain: MMSYIGLQQDSGEYKIQKIHAREILDSRGNPTIEVDVFTPKGFGRASVPSGASTGTNEALELRDADPNRYGGKGVLTAVKNVNTIIQKELLGLDVRNQREIDELMIELDETENKSNLGANSILGVSMAVAKAAADSLNMPLYRYFGGSNAFTLPVPTMNVLNGGKHAGNELAIQEFMIQPKGAETFYEALQIGAEIYHVLGKYLEKKYGRSSTNVGYEGGYAPKMSESTEALDALVQAIEEAGYTESEVTIGLDAAATEFYEEEFYNIDGKKLAAPELLDYYVELVNSYPILSIEDPFYEEAFEDFEALTNELWDTIIVGDDLFVTNIERLSRGVDMGAANALLLKVNQIGSISEAFDAASMASRNGYTVIVSHRSAETEDTTISDLAVAIGAEMIKTGAPARGERTAKYNQLLRIEEDLGEVAHYVQL.

Glutamine 174 lines the (2R)-2-phosphoglycerate pocket. Residue glutamate 218 is the Proton donor of the active site. Mg(2+) contacts are provided by aspartate 254, glutamate 295, and aspartate 321. Positions 346, 375, 376, and 397 each coordinate (2R)-2-phosphoglycerate. Residue lysine 346 is the Proton acceptor of the active site.

Belongs to the enolase family. The cofactor is Mg(2+).

The protein resides in the cytoplasm. It localises to the secreted. It is found in the cell surface. The catalysed reaction is (2R)-2-phosphoglycerate = phosphoenolpyruvate + H2O. It functions in the pathway carbohydrate degradation; glycolysis; pyruvate from D-glyceraldehyde 3-phosphate: step 4/5. Its function is as follows. Catalyzes the reversible conversion of 2-phosphoglycerate (2-PG) into phosphoenolpyruvate (PEP). It is essential for the degradation of carbohydrates via glycolysis. The protein is Enolase of Methanosarcina acetivorans (strain ATCC 35395 / DSM 2834 / JCM 12185 / C2A).